A 274-amino-acid polypeptide reads, in one-letter code: Diaminopimelate epimerase (274 aa).

Residues asparagine 11, glutamine 44, and asparagine 64 each coordinate substrate. Catalysis depends on cysteine 73, which acts as the Proton donor. Residues 74–75 (GN), asparagine 157, asparagine 190, and 208–209 (ER) each bind substrate. Cysteine 217 functions as the Proton acceptor in the catalytic mechanism. 218 to 219 (GS) contacts substrate.

This sequence belongs to the diaminopimelate epimerase family. Homodimer.

Its subcellular location is the cytoplasm. It carries out the reaction (2S,6S)-2,6-diaminopimelate = meso-2,6-diaminopimelate. It participates in amino-acid biosynthesis; L-lysine biosynthesis via DAP pathway; DL-2,6-diaminopimelate from LL-2,6-diaminopimelate: step 1/1. Catalyzes the stereoinversion of LL-2,6-diaminopimelate (L,L-DAP) to meso-diaminopimelate (meso-DAP), a precursor of L-lysine and an essential component of the bacterial peptidoglycan. This Actinobacillus pleuropneumoniae serotype 7 (strain AP76) protein is Diaminopimelate epimerase.